Consider the following 225-residue polypeptide: Protein-L-isoaspartate O-methyltransferase (225 aa).

Residue Ser75 is part of the active site.

It belongs to the methyltransferase superfamily. L-isoaspartyl/D-aspartyl protein methyltransferase family.

It is found in the cytoplasm. It carries out the reaction [protein]-L-isoaspartate + S-adenosyl-L-methionine = [protein]-L-isoaspartate alpha-methyl ester + S-adenosyl-L-homocysteine. Functionally, catalyzes the methyl esterification of L-isoaspartyl residues in peptides and proteins that result from spontaneous decomposition of normal L-aspartyl and L-asparaginyl residues. It plays a role in the repair and/or degradation of damaged proteins. The sequence is that of Protein-L-isoaspartate O-methyltransferase from Stenotrophomonas maltophilia (strain R551-3).